The following is a 345-amino-acid chain: Gibberellin receptor GID1A (345 aa).

At alanine 2 the chain carries N-acetylalanine. Positions 113–115 (HGG) match the Involved in the stabilization of the negatively charged intermediate by the formation of the oxyanion hole motif. Gibberellin A4 contacts are provided by residues 115 to 116 (GS), tyrosine 127, and serine 191. Gibberellin A3 contacts are provided by serine 116, tyrosine 127, serine 191, and phenylalanine 238. Residue serine 191 is part of the active site. Aspartate 289 is a catalytic residue. Residue glycine 320 participates in gibberellin A4 binding. Glycine 320 is a binding site for gibberellin A3.

It belongs to the 'GDXG' lipolytic enzyme family. In terms of assembly, interacts (via N-terminus) with the DELLA proteins GAI, RGA, RGL1, RGL2 and RGL3 (via N-terminus) in a GA-dependent manner. Widely expressed.

It localises to the nucleus. Its function is as follows. Functions as a soluble gibberellin (GA) receptor. GA is an essential hormone that regulates growth and development in plants. Binds with high affinity the biologically active gibberellin GA4, but has no affinity for the biologically inactive GAs. In response to GA, interacts with specific DELLA proteins, known as repressors of GA-induced growth, and targets them for degradation via proteasome. Seems to be required for GA signaling that controls root growth, seed germination, stem elongation and flower development. Partially redundant with GID1B and GID1C. This Arabidopsis thaliana (Mouse-ear cress) protein is Gibberellin receptor GID1A (GID1A).